The chain runs to 1080 residues: Histone-lysine N-methyltransferase, H3 lysine-4 specific (1080 aa).

Disordered regions lie at residues 1–46 (MSNY…SQYN), 54–73 (NDGT…NNAS), and 78–121 (YATN…SSGS). The segment at 1-230 (MSNYYRRAHA…THRKCRNSLI (230 aa)) is binds SWD2. Over residues 11–28 (SSGSYRQPQEQPQYSRSG) the composition is skewed to polar residues. A compositionally biased stretch (low complexity) spans 29–46 (HYQYSNGHSHQQYSSQYN). Over residues 54–67 (NDGTRRRYNDDRPH) the composition is skewed to basic and acidic residues. Polar residues-rich tracts occupy residues 78–87 (YATNNSQSGP) and 99–121 (RGMS…SSGS). Residues 230 to 569 (ILLPRISYDR…ALDHANFPEL (340 aa)) are binds RNA. Positions 356 to 569 (KKLQKLQENL…ALDHANFPEL (214 aa)) are binds SHG1. Ser625 is subject to Phosphoserine. Residues 646–729 (AHLLNEETDS…DQNGSSDVLD (84 aa)) are disordered. Acidic residues predominate over residues 674–692 (DEEDENMTSSSSEEEEEEA). The span at 693–712 (PDKKFKSESEPTTPESDHLH) shows a compositional bias: basic and acidic residues. The segment at 762–938 (MDLQNAIKDE…SLNQLNKRKK (177 aa)) is binds SPP1. The segment at 762 to 938 (MDLQNAIKDE…SLNQLNKRKK (177 aa)) is contributes to RNA binding. Residues 762 to 938 (MDLQNAIKDE…SLNQLNKRKK (177 aa)) are required for catalytic activity. Thr875 is modified (phosphothreonine). Composition is skewed to basic and acidic residues over residues 877 to 890 (ELCQ…KEPS) and 899 to 909 (SSRDNRASNRR). The segment at 877–909 (ELCQREESSNKEPSDSVPQEVSSSRDNRASNRR) is disordered. A RxxxRR motif motif is present at residues 904 to 909 (RASNRR). Positions 938–1055 (KPVMFARSAI…ASEELTYDYK (118 aa)) constitute an SET domain. Tyr1054 is an S-adenosyl-L-methionine binding site. Residues 1064-1080 (ERLPCLCGAPNCKGFLN) form the Post-SET domain.

It belongs to the class V-like SAM-binding methyltransferase superfamily. In terms of assembly, component of the Set1C/COMPASS complex which consists of SET1(2), BRE2(2), SPP1(2), SDC1(1), SHG1(1), SWD1(1), SWD2(1), and SWD3(1). Interacts with MEC3.

Its subcellular location is the nucleus. It is found in the chromosome. The enzyme catalyses L-lysyl(4)-[histone H3] + 3 S-adenosyl-L-methionine = N(6),N(6),N(6)-trimethyl-L-lysyl(4)-[histone H3] + 3 S-adenosyl-L-homocysteine + 3 H(+). It catalyses the reaction N(6)-methyl-L-lysyl(4)-[histone H3] + S-adenosyl-L-methionine = N(6),N(6)-dimethyl-L-lysyl(4)-[histone H3] + S-adenosyl-L-homocysteine + H(+). The catalysed reaction is N(6),N(6)-dimethyl-L-lysyl(4)-[histone H3] + S-adenosyl-L-methionine = N(6),N(6),N(6)-trimethyl-L-lysyl(4)-[histone H3] + S-adenosyl-L-homocysteine + H(+). Catalytic component of the COMPASS (Set1C) complex that specifically mono-, di- and trimethylates histone H3 to form H3K4me1/2/3. Binds RNAs involved in chromosome segregation, splicing and transcriptional regulation; appears to bind transcripts both co- and post-transcriptionally and binding might negatively affect its histone methyltransferase activity. COMPASS recognizes ubiquitinated H2B on one face of the nucleosome which stimulates the methylation of H3 on the opposing face. Plays a role in telomere length maintenance and transcription elongation regulation. This Saccharomyces cerevisiae (strain ATCC 204508 / S288c) (Baker's yeast) protein is Histone-lysine N-methyltransferase, H3 lysine-4 specific.